A 424-amino-acid polypeptide reads, in one-letter code: Exodeoxyribonuclease 7 large subunit (424 aa).

This sequence belongs to the XseA family. As to quaternary structure, heterooligomer composed of large and small subunits.

The protein resides in the cytoplasm. The enzyme catalyses Exonucleolytic cleavage in either 5'- to 3'- or 3'- to 5'-direction to yield nucleoside 5'-phosphates.. Bidirectionally degrades single-stranded DNA into large acid-insoluble oligonucleotides, which are then degraded further into small acid-soluble oligonucleotides. The polypeptide is Exodeoxyribonuclease 7 large subunit (Cyanothece sp. (strain PCC 7425 / ATCC 29141)).